The following is a 679-amino-acid chain: Single-strand DNA endonuclease ASTE1 (679 aa).

Residues 351-400 form an interaction with SHLD2 region; sequence TILPTQVENMQQPNAHRISQPIRQIIYGLLLNASPHLDKTSWNALPPQPL. Residues 625–645 form a disordered region; it reads RSNSKKKRQKKQNTSCSKNRG. A compositionally biased stretch (basic residues) spans 626 to 635; that stretch reads SNSKKKRQKK.

Belongs to the asteroid family. Interacts with SHLD1, SHLD2, SHLD3, RIF1 and MAD2L2/REV7.

Its function is as follows. Structure-specific DNA endonuclease that specifically cleaves single-stranded DNA and 3' overhang DNA. Contributes to the control of DNA double-strand break repair choice by antagonizing BRCA1-dependent homologous recombination (HR) and promoting non-homologous end-joining (NHEJ). Recruited to the single-stranded DNA ends by SHLD2 and cleaves the 3' exposed DNA ends, therefore inhibiting DNA end resection (necessary for HR) and promoting DNA end protection (necessary for NHEJ). In Pongo abelii (Sumatran orangutan), this protein is Single-strand DNA endonuclease ASTE1 (ASTE1).